The primary structure comprises 229 residues: Ribonuclease 3 (229 aa).

An RNase III domain is found at 4–133 (WEELQESVGF…FIGALYLDNG (130 aa)). Glu46 contacts Mg(2+). Asp50 is an active-site residue. Positions 119 and 122 each coordinate Mg(2+). The active site involves Glu122. One can recognise a DRBM domain in the interval 159–228 (DYKTQLQEIV…AQFAINKLIH (70 aa)).

It belongs to the ribonuclease III family. In terms of assembly, homodimer. The cofactor is Mg(2+).

It is found in the cytoplasm. The catalysed reaction is Endonucleolytic cleavage to 5'-phosphomonoester.. In terms of biological role, digests double-stranded RNA. Involved in the processing of primary rRNA transcript to yield the immediate precursors to the large and small rRNAs (23S and 16S). Processes some mRNAs, and tRNAs when they are encoded in the rRNA operon. Processes pre-crRNA and tracrRNA of type II CRISPR loci if present in the organism. This Listeria monocytogenes serovar 1/2a (strain ATCC BAA-679 / EGD-e) protein is Ribonuclease 3.